Consider the following 1165-residue polypeptide: Tectonin beta-propeller repeat-containing protein 1 (1165 aa).

4 TECPR repeats span residues 209–240, 254–285, 301–332, and 344–376; these read LSVW…SLLD, DLLW…SIVE, SVVW…IEMV, and DQVW…KAII. Phosphoserine is present on residues Ser386, Ser388, Ser391, Ser412, and Ser417. The interval 404–486 is disordered; that stretch reads RGSGESAPSD…GPAPTPAELP (83 aa). The region spanning 611–717 is the PH domain; that stretch reads KTGALQWWCD…WLALLSLSCC (107 aa). Residues 729-756 form a TECPR 5 repeat; the sequence is QAIWSITCKGDIFVSEPSPDLEAHEHPL. Residues Ser938 and Ser949 each carry the phosphoserine modification. TECPR repeat units lie at residues 953-984, 998-1029, 1044-1075, and 1087-1127; these read IALW…LHVG, YQVW…YHIP, TSVY…EHVS, and DQVW…DYGI. The segment at 1140-1165 is disordered; sequence ATRAPRSSSQEQEPSAPPEAHGPVCC. Low complexity predominate over residues 1143–1153; that stretch reads APRSSSQEQEP.

This sequence belongs to the TECPR1 family. As to quaternary structure, interacts with ATG5; the interaction is direct. Interacts with WIPI2. Interacts with the ATG5-ATG12 conjugate, the interaction is however mutually exclusive with ATG16, since it does not interact with ATG12-ATG5-ATG16 complex.

It localises to the cytoplasmic vesicle. The protein localises to the autophagosome membrane. Its subcellular location is the lysosome membrane. Its function is as follows. Tethering factor involved in autophagy. Involved in autophagosome maturation by promoting the autophagosome fusion with lysosomes: acts by associating with both the ATG5-ATG12 conjugate and phosphatidylinositol-3-phosphate (PtdIns(3)P) present at the surface of autophagosomes. Also involved in selective autophagy against bacterial pathogens, by being required for phagophore/preautophagosomal structure biogenesis and maturation. The protein is Tectonin beta-propeller repeat-containing protein 1 (TECPR1) of Homo sapiens (Human).